The primary structure comprises 71 residues: Frenatin 2.3S (71 aa).

An N-terminal signal peptide occupies residues 1–22 (MAFLKKSLFLVLFLGLVSLSMG). The segment at 21 to 56 (MGEREKREEEEEEEEENKEEEANEEGKGESEEKRGL) is disordered. Residues 23-54 (EREKREEEEEEEEENKEEEANEEGKGESEEKR) constitute a propeptide that is removed on maturation. Residues 28 to 43 (EEEEEEEEENKEEEAN) show a composition bias toward acidic residues. Basic and acidic residues predominate over residues 44–55 (EEGKGESEEKRG). G70 carries the post-translational modification Glycine amide; in Frenatin 2.1S.

The protein belongs to the frog skin active peptide (FSAP) family. Frenatin subfamily. Post-translationally, frenatin 2.3S is not amidated. In terms of tissue distribution, expressed by the skin glands.

It localises to the secreted. Its function is as follows. Antimicrobial peptide with potent activity against Gram-negative bacteria. Shows immunostimulatory actions both in vitro and in vivo. In vitro, is cytotoxic to non-small cell lung adenocarcinoma A549 cells. Also, stimulates production of pro-inflammatory cytokines by mouse peritoneal macrophages and down-regulates production of the anti-inflammatory cytokine IL-10 by lipopolysaccharide (LPS)-stimulated cells. In vivo, intraperitoneal injection in mice enhances the activation state and homing capacity of Th1 type lymphocytes and promotes the recruitment, activation and tumoricidal capacities of peritoneal NK cells. Has a very weak activity in stimulation of insulin release and a weak hemolytic activity. Functionally, antimicrobial peptide with potent activity against some Gram-positive and Gram-negative bacteria. Has a multifunctional mode of action. It displays depolarization and bacterial cell leakage, and can also internalize into bacterial cells and alter specific gene expression involved in bacterial resistance mechanisms. Does not agglutinate bacteria and lipid vesicles, even a high concentrations. Also displays moderate cellular protection against yellow fever virus (YFV)-infected Vero cells without causing significant cytotoxicity. Shows a weak hemolytic activity, and is not cytotoxic to monocytes. Frenatin 2.3S (version without Gly-71) shows no or very weak antibacterial activity, shows no or very weak cytotoxicity to lung adenocarcinoma A549 cells and shows very weak hemolysis. It only stimulates production of pro-inflammatory cytokines IL-23 (but not IL-1beta and TNF-alpha) by mouse peritoneal macrophages and has no effect on the production of the anti-inflammatory cytokine IL-10. Frenatin 2.3S (version without Gly-71) very weakly stimulates insulin release. This is Frenatin 2.3S from Sphaenorhynchus lacteus (Orinoco lime treefrog).